We begin with the raw amino-acid sequence, 1365 residues long: Serine/threonine-protein kinase LMTK1 (1365 aa).

Residues 32-52 (LAVVAVSFSGIFTVVILMLAC) form a helical membrane-spanning segment. A Protein kinase domain is found at 126-396 (LLYLKEIGHG…PTAEEVHLLL (271 aa)). ATP contacts are provided by residues 132–140 (IGHGWFGKV) and lysine 157. Aspartate 254 (proton acceptor) is an active-site residue. The residue at position 500 (serine 500) is a Phosphoserine. 5 disordered regions span residues 550-623 (PDCA…LPAE), 638-698 (DDPL…GYVS), 791-1186 (QEAE…PAVP), 1237-1293 (ESPT…EWDG), and 1343-1365 (ISDSDAQSVGGPAAGAGGRYTEA). The span at 560–575 (QAVTDQDNNSEESTVA) shows a compositional bias: polar residues. Low complexity-rich tracts occupy residues 638-655 (DDPLGASPSGSPGAQPSP) and 675-686 (SSNMSANNNSAS). Composition is skewed to polar residues over residues 848-860 (LESSGSSLGQEAP) and 869-879 (EATSGVFTDLS). Composition is skewed to low complexity over residues 904–918 (PDSLDSLDIPSSASD) and 981–993 (PLLSVSLGGLSKK). Positions 1015–1030 (PEKHSGIQDSQKEQDL) are enriched in basic and acidic residues. Serine 1035 bears the Phosphoserine mark. The span at 1037 to 1053 (GHQSVQAFPRSAVSSEV) shows a compositional bias: polar residues. The segment covering 1072–1083 (PLGAQGPVGVQP) has biased composition (low complexity). Residues 1104–1132 (GSGTEPQGPSGQLSGRAQQGQMGNPSTPR) show a composition bias toward polar residues. Acidic residues predominate over residues 1150-1164 (PEEDEDTEDSEESDE). Position 1156 is a phosphothreonine (threonine 1156). Serine 1159, serine 1162, serine 1175, serine 1178, and serine 1253 each carry phosphoserine. Residues 1354–1365 (PAAGAGGRYTEA) are compositionally biased toward gly residues.

This sequence belongs to the protein kinase superfamily. Tyr protein kinase family. In terms of assembly, interacts with CDK5. Post-translationally, autophosphorylated. Phosphorylated by CDK5. In terms of tissue distribution, expressed in brain, and, to a lower extent, in kidney, heart, lung and skeletal muscle. In the brain, expressed in the olfactory bulb, cerebellum, striatum, hippocampal formation, thalamus, hypothalamus, and pontine nuclei (at protein level).

Its subcellular location is the membrane. The protein localises to the cytoplasm. It is found in the perinuclear region. The protein resides in the cell projection. It localises to the dendrite. Its subcellular location is the axon. The protein localises to the growth cone. It carries out the reaction L-seryl-[protein] + ATP = O-phospho-L-seryl-[protein] + ADP + H(+). The catalysed reaction is L-threonyl-[protein] + ATP = O-phospho-L-threonyl-[protein] + ADP + H(+). Its function is as follows. May be involved in neuronal differentiation. This chain is Serine/threonine-protein kinase LMTK1 (Aatk), found in Mus musculus (Mouse).